Reading from the N-terminus, the 552-residue chain is Putative transport protein NT01EI_3867 (552 aa).

The next 5 membrane-spanning stretches (helical) occupy residues 4–24 (IALTVSMLSLVAVLGLWIGNW), 26–46 (IYGVGLGIGGVLFGGIIVGHF), 65–85 (FGLILFVYSIGIQVGPGFFSS), 90–112 (GLRLNAFAVLMVLISGLITAAIH), and 158–178 (MGYAMAYPFGICGILLVIWLI). 2 consecutive RCK C-terminal domains span residues 191–276 (RDFD…VIGE) and 279–361 (DTSL…IVGN). A run of 6 helical transmembrane segments spans residues 371–391 (MLPVFIGIGLGVLLGSVPLFI), 403–425 (AGGPLVVALILGRIGSIGKLYWF), 439–459 (IVLFLAVVGLKSGGNFIDTLL), 464–484 (VTWIGYGILITAIPLLTAALL), 493–513 (YLTLCGMLAGAMTDPPALAFA), and 530–550 (VYPLAMFLRIMSPQLLALLFW).

Belongs to the AAE transporter (TC 2.A.81) family. YidE subfamily.

The protein resides in the cell membrane. This Edwardsiella ictaluri (strain 93-146) protein is Putative transport protein NT01EI_3867.